The sequence spans 306 residues: MTNPLYKKHVISISDLTRPDMELVVATAQRLKAEPDTRLLKDKLVASCFFEASTRTRLSFETAVQRLGGNIIGFADGGNTSAKKGETLADSIKIIGSYTDAVVMRHPKEGAARLASEFSRVPVINGGDGSNQHPTQTLLDLFSIHETQGKLDGLNVAFVGDLKYGRTVHSLAQALSLFNCRFFFISPEALAMPDYICEELEEKGIQFSVHETMEEVMPELDILYMTRVQKERFDETEYKHMAAKFVLEVATLEGAKPTMKILHPLPRVDEIDVAVDKTPHAYYFQQAENGVYARQALLALVLNETV.

Carbamoyl phosphate is bound by residues arginine 55 and threonine 56. Lysine 84 serves as a coordination point for L-aspartate. Residues arginine 105, histidine 133, and glutamine 136 each contribute to the carbamoyl phosphate site. Residues arginine 166 and arginine 227 each contribute to the L-aspartate site. Carbamoyl phosphate-binding residues include leucine 265 and proline 266.

It belongs to the aspartate/ornithine carbamoyltransferase superfamily. ATCase family. As to quaternary structure, heterododecamer (2C3:3R2) of six catalytic PyrB chains organized as two trimers (C3), and six regulatory PyrI chains organized as three dimers (R2).

It carries out the reaction carbamoyl phosphate + L-aspartate = N-carbamoyl-L-aspartate + phosphate + H(+). It participates in pyrimidine metabolism; UMP biosynthesis via de novo pathway; (S)-dihydroorotate from bicarbonate: step 2/3. Catalyzes the condensation of carbamoyl phosphate and aspartate to form carbamoyl aspartate and inorganic phosphate, the committed step in the de novo pyrimidine nucleotide biosynthesis pathway. This Aeromonas hydrophila subsp. hydrophila (strain ATCC 7966 / DSM 30187 / BCRC 13018 / CCUG 14551 / JCM 1027 / KCTC 2358 / NCIMB 9240 / NCTC 8049) protein is Aspartate carbamoyltransferase catalytic subunit.